The chain runs to 616 residues: MALLQISEPGLTAAPHQRRLAAGIDLGTTNSLVATVRSGKAQTLADEQLRDLLPSVVHYQQNNIDVGWNARDLAALDPVNTISSVKRMMGRSLADIVQRYPNLPYQFQPSENGLPMIQTASGLVNPVQVSADILKALAQRARAALEGELDGVVITVPAYFDDAQRQGTKDAARLAGLHVLRLLNEPTAAAIAYGLDSGQEGVIAVYDLGGGTFDISILRLSRGVFEVLATGGDSALGGDDFDHLLADWLREQAGIDSRDDHGVQRQLLDAAIAAKITLSDAEVADVSVAGWQGQITREQFESLIVSLVKRTLMACRRALKDAGVTADEVLEVVMVGGSTRVPLVREQVGQFFGRTPLTSIDPDKVVAIGAAIQADILVGNKPDSDMLLLDVIPLSLGLETMGGLVEKVIPRNTTIPVARAQEFTTFKDGQSAMTIHVLQGERELVQDCRSLARFALRGLPPLPAGGAHIRVTFQVDADGLLSVTAMEKSTGVEASIQVKPSYGLSDDEIANMIKDSMANAQSDIGARKLAEQQVEASRVLESLQGALAEDAALLSEQESTAIAQAMAALQQQMQGTDPHAIEAAIKALDAQTQDFAARRMDASIRRALAGHSVDEV.

Belongs to the heat shock protein 70 family.

Its function is as follows. Chaperone involved in the maturation of iron-sulfur cluster-containing proteins. Has a low intrinsic ATPase activity which is markedly stimulated by HscB. Involved in the maturation of IscU. This is Chaperone protein HscA from Yersinia enterocolitica serotype O:8 / biotype 1B (strain NCTC 13174 / 8081).